The sequence spans 115 residues: Large ribosomal subunit protein bL20 (115 aa).

This sequence belongs to the bacterial ribosomal protein bL20 family.

Functionally, binds directly to 23S ribosomal RNA and is necessary for the in vitro assembly process of the 50S ribosomal subunit. It is not involved in the protein synthesizing functions of that subunit. The polypeptide is Large ribosomal subunit protein bL20 (Synechococcus sp. (strain CC9311)).